The chain runs to 241 residues: UPF0280 protein MK0206 (241 aa).

It belongs to the UPF0280 family.

This is UPF0280 protein MK0206 from Methanopyrus kandleri (strain AV19 / DSM 6324 / JCM 9639 / NBRC 100938).